A 548-amino-acid polypeptide reads, in one-letter code: 5-epi-aristolochene synthase 2 (548 aa).

5 residues coordinate Mg(2+): D301, D305, D444, T448, and E452. Residues 301–305 carry the DDXXD motif motif; the sequence is DDTFD.

This sequence belongs to the terpene synthase family. Monomer. The cofactor is Mg(2+). As to expression, expressed in roots, but not in shoots.

The protein localises to the cytoplasm. It carries out the reaction (2E,6E)-farnesyl diphosphate = (+)-5-epi-aristolochene + diphosphate. Its pathway is secondary metabolite biosynthesis; terpenoid biosynthesis. Functionally, catalyzes the cyclization of trans,trans-farnesyl diphosphate (FPP) to the bicyclic intermediate 5-epi-aristolochene, initial step in the conversion of FPP to the sesquiterpenoid antifungal phytoalexin capsidiol. Produces germacrene A as an enzyme-bound intermediate that is not released by the enzyme, but is further cyclized to produce the bicyclic 5-epi-aristolochene. This Nicotiana attenuata (Coyote tobacco) protein is 5-epi-aristolochene synthase 2.